The sequence spans 588 residues: Proline--tRNA ligase (588 aa).

The protein belongs to the class-II aminoacyl-tRNA synthetase family. ProS type 1 subfamily. As to quaternary structure, homodimer.

It localises to the cytoplasm. The catalysed reaction is tRNA(Pro) + L-proline + ATP = L-prolyl-tRNA(Pro) + AMP + diphosphate. In terms of biological role, catalyzes the attachment of proline to tRNA(Pro) in a two-step reaction: proline is first activated by ATP to form Pro-AMP and then transferred to the acceptor end of tRNA(Pro). As ProRS can inadvertently accommodate and process non-cognate amino acids such as alanine and cysteine, to avoid such errors it has two additional distinct editing activities against alanine. One activity is designated as 'pretransfer' editing and involves the tRNA(Pro)-independent hydrolysis of activated Ala-AMP. The other activity is designated 'posttransfer' editing and involves deacylation of mischarged Ala-tRNA(Pro). The misacylated Cys-tRNA(Pro) is not edited by ProRS. The sequence is that of Proline--tRNA ligase from Helicobacter hepaticus (strain ATCC 51449 / 3B1).